The following is a 98-amino-acid chain: Cytochrome c2 (98 aa).

At glutamine 1 the chain carries Pyrrolidone carboxylic acid. Heme c-binding residues include cysteine 10, cysteine 13, histidine 14, and methionine 76.

Belongs to the cytochrome c family. Post-translationally, binds 1 heme c group covalently per subunit.

The protein localises to the periplasm. Its function is as follows. Cytochrome c2 is found mainly in purple, non-sulfur, photosynthetic bacteria where it functions as the electron donor to the oxidized bacteriochlorophyll in the photophosphorylation pathway. However, it may also have a role in the respiratory chain and is found in some non-photosynthetic bacteria. The sequence is that of Cytochrome c2 from Rhodoplanes tepidamans (Rhodoplanes cryptolactis).